We begin with the raw amino-acid sequence, 246 residues long: MTDPRILVLIPARMAATRLPGKPLADIAGLPMIVHVLRRAEAAGIGRVAVATDTPEIAAVVAAHGGEAVMTRTTHPSGSDRIHEAMQKLDPEGKAEIVINLQGDFPTITPQTIREVLPPFADPAVDIVTLASQIHTEEEDLAPSVVKAVGSPIGPRRLRALYFTRATAPYGNGPRYHHIGLYAYRRAALERFVSLPPSPLELQESLEQLRAVEAGMRIDIMIVDSVPRGVDTPPDLETARSILSKS.

This sequence belongs to the KdsB family.

It is found in the cytoplasm. The enzyme catalyses 3-deoxy-alpha-D-manno-oct-2-ulosonate + CTP = CMP-3-deoxy-beta-D-manno-octulosonate + diphosphate. The protein operates within nucleotide-sugar biosynthesis; CMP-3-deoxy-D-manno-octulosonate biosynthesis; CMP-3-deoxy-D-manno-octulosonate from 3-deoxy-D-manno-octulosonate and CTP: step 1/1. It functions in the pathway bacterial outer membrane biogenesis; lipopolysaccharide biosynthesis. In terms of biological role, activates KDO (a required 8-carbon sugar) for incorporation into bacterial lipopolysaccharide in Gram-negative bacteria. The sequence is that of 3-deoxy-manno-octulosonate cytidylyltransferase from Bradyrhizobium diazoefficiens (strain JCM 10833 / BCRC 13528 / IAM 13628 / NBRC 14792 / USDA 110).